A 113-amino-acid chain; its full sequence is MKLKNNLLEKTLELSELFKIYKELLTDKQKQYFELYIDEDLSLSEIADEFNISKTAVYDSISKTSKLLFSLEKKLHLKQKEELLISLINKIETNQIDEKQFIKSLKEVIWWKY.

The protein belongs to the UPF0122 family.

Might take part in the signal recognition particle (SRP) pathway. This is inferred from the conservation of its genetic proximity to ftsY/ffh. May be a regulatory protein. The chain is UPF0122 protein MCAP_0480 from Mycoplasma capricolum subsp. capricolum (strain California kid / ATCC 27343 / NCTC 10154).